Here is a 275-residue protein sequence, read N- to C-terminus: Biotin synthase (275 aa).

One can recognise a Radical SAM core domain in the interval 1–217 (MLCAICNVSS…DTAKTLPQCR (217 aa)). [4Fe-4S] cluster contacts are provided by cysteine 13, cysteine 17, and cysteine 20. Residues cysteine 57, cysteine 92, cysteine 150, and arginine 217 each coordinate [2Fe-2S] cluster.

This sequence belongs to the radical SAM superfamily. Biotin synthase family. Homodimer. [4Fe-4S] cluster serves as cofactor. It depends on [2Fe-2S] cluster as a cofactor.

The enzyme catalyses (4R,5S)-dethiobiotin + (sulfur carrier)-SH + 2 reduced [2Fe-2S]-[ferredoxin] + 2 S-adenosyl-L-methionine = (sulfur carrier)-H + biotin + 2 5'-deoxyadenosine + 2 L-methionine + 2 oxidized [2Fe-2S]-[ferredoxin]. The protein operates within cofactor biosynthesis; biotin biosynthesis; biotin from 7,8-diaminononanoate: step 2/2. Functionally, catalyzes the conversion of dethiobiotin (DTB) to biotin by the insertion of a sulfur atom into dethiobiotin via a radical-based mechanism. The sequence is that of Biotin synthase from Campylobacter fetus subsp. fetus (strain 82-40).